Consider the following 299-residue polypeptide: Probable alpha-L-glutamate ligase (299 aa).

Positions 104–287 constitute an ATP-grasp domain; that stretch reads LQLLAREGIE…VSGKIIEFLE (184 aa). ATP contacts are provided by residues lysine 141, 178–179, aspartate 187, and 211–213; these read EF and RSN. Mg(2+)-binding residues include aspartate 248, glutamate 260, and asparagine 262. 3 residues coordinate Mn(2+): aspartate 248, glutamate 260, and asparagine 262.

The protein belongs to the RimK family. The cofactor is Mg(2+). It depends on Mn(2+) as a cofactor.

The protein is Probable alpha-L-glutamate ligase of Trichodesmium erythraeum (strain IMS101).